Here is a 232-residue protein sequence, read N- to C-terminus: Phosphatidylserine decarboxylase proenzyme (232 aa).

The active-site Schiff-base intermediate with substrate; via pyruvic acid is the Ser-190. Residue Ser-190 is modified to Pyruvic acid (Ser); by autocatalysis.

This sequence belongs to the phosphatidylserine decarboxylase family. PSD-A subfamily. Heterodimer of a large membrane-associated beta subunit and a small pyruvoyl-containing alpha subunit. Pyruvate is required as a cofactor. In terms of processing, is synthesized initially as an inactive proenzyme. Formation of the active enzyme involves a self-maturation process in which the active site pyruvoyl group is generated from an internal serine residue via an autocatalytic post-translational modification. Two non-identical subunits are generated from the proenzyme in this reaction, and the pyruvate is formed at the N-terminus of the alpha chain, which is derived from the carboxyl end of the proenzyme. The post-translation cleavage follows an unusual pathway, termed non-hydrolytic serinolysis, in which the side chain hydroxyl group of the serine supplies its oxygen atom to form the C-terminus of the beta chain, while the remainder of the serine residue undergoes an oxidative deamination to produce ammonia and the pyruvoyl prosthetic group on the alpha chain.

It localises to the cell membrane. It catalyses the reaction a 1,2-diacyl-sn-glycero-3-phospho-L-serine + H(+) = a 1,2-diacyl-sn-glycero-3-phosphoethanolamine + CO2. The protein operates within phospholipid metabolism; phosphatidylethanolamine biosynthesis; phosphatidylethanolamine from CDP-diacylglycerol: step 2/2. Catalyzes the formation of phosphatidylethanolamine (PtdEtn) from phosphatidylserine (PtdSer). The polypeptide is Phosphatidylserine decarboxylase proenzyme (Rhizobium leguminosarum bv. trifolii (strain WSM2304)).